The chain runs to 259 residues: Ribosomal RNA small subunit methyltransferase J (259 aa).

Residues 101–102 (RD), 117–118 (ER), 153–154 (SS), and Asp-176 contribute to the S-adenosyl-L-methionine site.

The protein belongs to the methyltransferase superfamily. RsmJ family.

It localises to the cytoplasm. It catalyses the reaction guanosine(1516) in 16S rRNA + S-adenosyl-L-methionine = N(2)-methylguanosine(1516) in 16S rRNA + S-adenosyl-L-homocysteine + H(+). Specifically methylates the guanosine in position 1516 of 16S rRNA. This chain is Ribosomal RNA small subunit methyltransferase J, found in Aliivibrio fischeri (strain ATCC 700601 / ES114) (Vibrio fischeri).